Consider the following 391-residue polypeptide: Probable sugar efflux transporter (391 aa).

Transmembrane regions (helical) follow at residues 16–36 (VFVFSLSAFIFNTTEFVPVAL), 51–71 (VGLMITAYAWVVSLGSLPLML), 82–102 (LLFLFALFILSHILSALAWNF), 110–130 (MGIAFAHSIFWSITASLVIRV), 138–158 (QALGLLALGSSLAMILGLPLG), 170–190 (TFGVIGGVATLIALLMWKLLP), 210–230 (PLLMGIYLLVIMVISGHFTTY), 247–267 (ITTLMLFVFGLAGVVGSFLFG), 277–297 (FIAFAMVLVICPQLLLFVFKN), 300–320 (WVVFLQIFLWGIGITSLGISL), 338–358 (IYSGSYNVGIGSGALFGSIVI), and 361–381 (LGLGYIGFVGGALGLLALFWL).

This sequence belongs to the major facilitator superfamily. SotB (TC 2.A.1.2) family.

The protein localises to the cell inner membrane. In terms of biological role, involved in the efflux of sugars. The physiological role may be the reduction of the intracellular concentration of toxic sugars or sugar metabolites. This chain is Probable sugar efflux transporter, found in Helicobacter pylori (strain ATCC 700392 / 26695) (Campylobacter pylori).